The primary structure comprises 351 residues: RCC1 repeat-containing protein C10F6.04 (351 aa).

4 RCC1 repeats span residues 1 to 48 (MLLS…LLDE), 50 to 106 (SQLW…IVHA), 108 to 162 (RRRV…CVTN), and 163 to 212 (EGNL…VLQE).

The protein localises to the cytoplasm. Its subcellular location is the nucleus. This is RCC1 repeat-containing protein C10F6.04 from Schizosaccharomyces pombe (strain 972 / ATCC 24843) (Fission yeast).